A 336-amino-acid chain; its full sequence is MKNNYTSLKSPIDEEDELKTGHEIDLEKGLLPEYDSEEEGALPPYSDHARVSNPPNTHRENHSSGTTDDSSPFLIKLLISFTPIVLLNALAVWYLKYKDAFFKNYGAAEWTLFGFWCLVCTLVLIILTYFYETWTKAVKVTVIFLAQCIKVTAVFLAQCVKGLFNIRREMMIIIWILWLIICCILFGCVKDGRLNFNKALICSTCTISAVLFLIVSSVCIPIWTLWRALSGMLQVLGIHGIIAVLVNGSMSLFGKHFGWRGYEIEGFVLFFTSNALFLYEMERPGVLKRMRNTTGNVIGYICGGIEDAFRRIKNAFRGANDNNNIPLGEMDVEGEV.

Disordered regions lie at residues 1 to 21 and 35 to 68; these read MKNN…LKTG and DSEE…GTTD. 7 helical membrane-spanning segments follow: residues 73–93, 110–130, 140–160, 169–189, 206–226, 228–248, and 261–281; these read FLIK…LAVW, WTLF…LTYF, VTVI…AQCV, EMMI…FGCV, TISA…WTLW, ALSG…LVNG, and GYEI…LYEM.

This sequence belongs to the WTF family. Homomer. Interacts with other proteins that exhibit high sequence similarity.

The protein resides in the spore membrane. The protein localises to the vacuole membrane. In terms of biological role, acts as a suppressor component of the dual wtf meiotic drive system, and can suppress but not confer meiotic drive by compatible poisons. Wtf meiotic drive systems promote unequal transmission of alleles from the parental zygote to progeny spores by encoding a poison and an antidote from the same locus; the poison is trans-acting and forms toxic aggregates in all spores within an ascus, wherease the antidote is spore-specific and targets aggregates for degradation by the vacuole. Meiotic drive by wtf systems therefore lead to poisoning of all progeny that do not inherit the dual poison/antidote allele, or express a compatible antidote. In Schizosaccharomyces kambucha (Fission yeast), this protein is Meiotic drive suppressor wtf23.